Consider the following 89-residue polypeptide: uncharacterized protein (89 aa).

The protein to M.tuberculosis Rv3402c.

This is an uncharacterized protein from Mycobacterium tuberculosis (strain CDC 1551 / Oshkosh).